We begin with the raw amino-acid sequence, 1873 residues long: Voltage-dependent L-type calcium channel subunit alpha-1S (1873 aa).

A disordered region spans residues 1–23 (MEPSSPQDEGLRKKQPKKPVPEI). Residues 1–51 (MEPSSPQDEGLRKKQPKKPVPEILPRPPRALFCLTLENPLRKACISIVEWK) are Cytoplasmic-facing. One copy of the I repeat lies at 38 to 337 (NPLRKACISI…LVLGVLSGEF (300 aa)). A helical membrane pass occupies residues 52–70 (PFETIILLTIFANCVALAV). Topologically, residues 71-85 (YLPMPEDDNNSLNLG) are extracellular. The N-linked (GlcNAc...) asparagine glycan is linked to N79. A helical membrane pass occupies residues 86 to 106 (LEKLEYFFLIVFSIEAAMKII). Over 107 to 115 (AYGFLFHQD) the chain is Cytoplasmic. A helical transmembrane segment spans residues 116-136 (AYLRSGWNVLDFTIVFLGVFT). Topologically, residues 137–160 (VILEQVNVIQSHTAPMSSKGAGLD) are extracellular. A helical membrane pass occupies residues 161-179 (VKALRAFRVLRPLRLVSGV). Topologically, residues 180–196 (PSLQVVLNSIFKAMLPL) are cytoplasmic. A helical transmembrane segment spans residues 197 to 218 (FHIALLVLFMVIIYAIIGLELF). Residues 219–279 (KGKMHKTCYF…HGITHFDNFG (61 aa)) are Extracellular-facing. 2 disulfides stabilise this stretch: C226-C254 and C245-C261. A glycan (N-linked (GlcNAc...) asparagine) is linked at N257. Residues 280 to 301 (FSMLTVYQCITMEGWTDVLYWV) constitute an intramembrane region (pore-forming). The short motif at 290–293 (TMEG) is the Selectivity filter of repeat I element. A Ca(2+)-binding site is contributed by E292. Residues 302 to 309 (NDAIGNEW) lie on the Extracellular side of the membrane. Residues 310 to 330 (PWIYFVTLILLGSFFILNLVL) traverse the membrane as a helical segment. Residues 331-432 (GVLSGEFTKE…WKCHDIVKSK (102 aa)) lie on the Cytoplasmic side of the membrane. Residues 357-374 (QQLDEDLRGYMSWITQGE) form a binding to the beta subunit region. Phosphoserine occurs at positions 393 and 397. An II repeat occupies 418-664 (NRIFRWKCHD…VFLAIAVDNL (247 aa)). A helical transmembrane segment spans residues 433-451 (VFYWLVILIVALNTLSIAS). The Extracellular portion of the chain corresponds to 452 to 462 (EHHNQPLWLTR). A helical transmembrane segment spans residues 463 to 483 (LQDIANRVLLSLFTTEMLMKM). The Cytoplasmic portion of the chain corresponds to 484–494 (YGLGLRQYFMS). The chain crosses the membrane as a helical span at residues 495-514 (IFNRFDCFVVCSGILEILLV). The Extracellular portion of the chain corresponds to 515-523 (ESGAMTPLG). Residues 524-542 (ISVLRCIRLLRIFKITKYW) form a helical membrane-spanning segment. Over 543–561 (TSLSNLVASLLNSIRSIAS) the chain is Cytoplasmic. Residues 562-581 (LLLLLFLFIVIFALLGMQLF) form a helical membrane-spanning segment. The Extracellular portion of the chain corresponds to 582–601 (GGRYDFEDTEVRRSNFDNFP). Positions 602 to 623 (QALISVFQVLTGEDWTSMMYNG) form an intramembrane region, pore-forming. Positions 612 to 615 (TGED) match the Selectivity filter of repeat II motif. E614 contributes to the Ca(2+) binding site. Residues 624 to 633 (IMAYGGPSYP) lie on the Extracellular side of the membrane. Residues 634–653 (GMLVCIYFIILFVCGNYILL) form a helical membrane-spanning segment. Over 654–799 (NVFLAIAVDN…VLCHRIVNAT (146 aa)) the chain is Cytoplasmic. Disordered stretches follow at residues 675–717 (KAKA…IPTT) and 731–757 (EVKD…LSPR). S687 is subject to Phosphoserine; by PKA. A compositionally biased stretch (basic and acidic residues) spans 690 to 711 (LPDKSEEEKSTMAKKLEQKPKG). Residues 742–751 (PGDDEEDEPE) are compositionally biased toward acidic residues. Residues 747-760 (EDEPEIPLSPRPRP) are interaction with STAC, STAC2 and STAC3 (via SH3 domains). The stretch at 786 to 1068 (NKIRVLCHRI…IFVGFVIVTF (283 aa)) is one III repeat. The helical transmembrane segment at 800–818 (WFTNFILLFILLSSAALAA) threads the bilayer. The Extracellular portion of the chain corresponds to 819–830 (EDPIRADSMRNQ). Residues 831–850 (ILKHFDIGFTSVFTVEIVLK) traverse the membrane as a helical segment. The Cytoplasmic segment spans residues 851 to 866 (MTTYGAFLHKGSFCRN). A helical transmembrane segment spans residues 867-885 (YFNMLDLLVVAVSLISMGL). Residues 886–892 (ESSAISV) lie on the Extracellular side of the membrane. A helical membrane pass occupies residues 893–911 (VKILRVLRVLRPLRAINRA). Residues 912–930 (KGLKHVVQCMFVAISTIGN) are Cytoplasmic-facing. A helical transmembrane segment spans residues 931 to 950 (IVLVTTLLQFMFACIGVQLF). Topologically, residues 951-1000 (KGKFFRCTDLSKMTEEECRGYYYVYKDGDPMQIELRHREWVHSDFHFDNV) are extracellular. A disulfide bridge connects residues C957 and C968. Positions 988-1077 (REWVHSDFHF…FQEQGETEYK (90 aa)) are dihydropyridine binding. Positions 1001–1021 (LSAMMSLFTVSTFEGWPQLLY) form an intramembrane region, pore-forming. Positions 1012–1015 (TFEG) match the Selectivity filter of repeat III motif. E1014 contributes to the Ca(2+) binding site. Residues 1022-1038 (KAIDSNAEDVGPIYNNR) lie on the Extracellular side of the membrane. The chain crosses the membrane as a helical span at residues 1039-1060 (VEMAIFFIIYIILIAFFMMNIF). Residues 1061–1118 (VGFVIVTFQEQGETEYKNCELDKNQRQCVQYALKARPLRCYIPKNPYQYQVWYIVTSS) lie on the Cytoplasmic side of the membrane. The IV repeat unit spans residues 1105-1384 (NPYQYQVWYI…LFVAVIMDNF (280 aa)). Residues 1119–1140 (YFEYLMFALIMLNTICLGMQHY) form a helical membrane-spanning segment. Residue N1141 is glycosylated (N-linked (GlcNAc...) asparagine). At 1141–1148 (NQSEQMNH) the chain is on the extracellular side. Residues 1149 to 1170 (ISDILNVAFTIIFTLEMILKLM) form a helical membrane-spanning segment. Topologically, residues 1171–1180 (AFKARGYFGD) are cytoplasmic. Residues 1181-1200 (PWNVFDFLIVIGSIIDVILS) form a helical membrane-spanning segment. The Extracellular portion of the chain corresponds to 1201-1231 (EIDTFLASSGGLYCLGGGCGNVDPDESARIS). A helical membrane pass occupies residues 1232 to 1250 (SAFFRLFRVMRLIKLLSRA). The Cytoplasmic portion of the chain corresponds to 1251–1268 (EGVRTLLWTFIKSFQALP). Residues 1269–1289 (YVALLIVMLFFIYAVIGMQMF) form a helical membrane-spanning segment. Residues 1290–1311 (GKIALVDGTQINRNNNFQTFPQ) are Extracellular-facing. The segment at residues 1312-1330 (AVLLLFRCATGEAWQEILL) is an intramembrane region (pore-forming). The Selectivity filter of repeat IV signature appears at 1321–1324 (TGEA). Over 1331–1356 (ACSYGKLCDPESDYAPGEEYTCGTNF) the chain is Extracellular. The interval 1337–1403 (LCDPESDYAP…LGPHHLDEFK (67 aa)) is dihydropyridine binding. A disulfide bridge links C1338 with C1352. The phenylalkylamine binding stretch occupies residues 1349-1391 (EYTCGTNFAYYYFISFYMLCAFLVINLFVAVIMDNFDYLTRDW). The helical transmembrane segment at 1357–1381 (AYYYFISFYMLCAFLVINLFVAVIM) threads the bilayer. Residues 1382–1873 (DNFDYLTRDW…SQETLIPPRL (492 aa)) are Cytoplasmic-facing. The interval 1522–1542 (KFYATFLIQEHFRKFMKRQEE) is interaction with calmodulin. S1575 is modified (phosphoserine; by PKA and CAMK2). Phosphoserine; by PKA is present on S1617. Residues 1731–1780 (MPRGQAPPAPCQCPRVESSMPEDRKSSTPGSLHEETPHSRSTRENTSRCS) form a disordered region. A compositionally biased stretch (basic and acidic residues) spans 1751 to 1776 (PEDRKSSTPGSLHEETPHSRSTRENT).

This sequence belongs to the calcium channel alpha-1 subunit (TC 1.A.1.11) family. CACNA1S subfamily. In terms of assembly, component of a calcium channel complex consisting of a pore-forming alpha subunit (CACNA1S) and the ancillary subunits CACNB1 or CACNB2, CACNG1 and CACNA2D1. The channel complex contains alpha, beta, gamma and delta subunits in a 1:1:1:1 ratio, i.e. it contains either CACNB1 or CACNB2. CACNA1S channel activity is modulated by the auxiliary subunits (CACNB1 or CACNB2, CACNG1 and CACNA2D1). Interacts with DYSF and JSRP1. Interacts with RYR1. Interacts with STAC, STAC2 and STAC3 (via their SH3 domains). Interacts with CALM. The alpha-1S subunit is found in two isoforms in the skeletal muscle: a minor form of 212 kDa containing the complete amino acid sequence, and a major form of 190 kDa derived from the full-length form by post-translational proteolysis close to Phe-1690. Post-translationally, phosphorylated. Phosphorylation by PKA activates the calcium channel. Both the minor and major forms are phosphorylated in vitro by PKA. Phosphorylation at Ser-1575 is involved in beta-adrenergic-mediated regulation of the channel. In terms of tissue distribution, skeletal muscle specific.

The protein resides in the cell membrane. Its subcellular location is the sarcolemma. It localises to the T-tubule. It catalyses the reaction Ca(2+)(in) = Ca(2+)(out). Channel activity is blocked by dihydropyridines (DHP), phenylalkylamines, and by benzothiazepines. Its function is as follows. Pore-forming, alpha-1S subunit of the voltage-gated calcium channel that gives rise to L-type calcium currents in skeletal muscle. Calcium channels containing the alpha-1S subunit play an important role in excitation-contraction coupling in skeletal muscle via their interaction with RYR1, which triggers Ca(2+) release from the sarcoplasmic reticulum and ultimately results in muscle contraction. Long-lasting (L-type) calcium channels belong to the 'high-voltage activated' (HVA) group. In Homo sapiens (Human), this protein is Voltage-dependent L-type calcium channel subunit alpha-1S (CACNA1S).